Reading from the N-terminus, the 280-residue chain is MKIKAYAKINIALDIVGKREDGYHILKMIMQTIDLYDIIEIEKTESEIRLNCNKHYVPTDERNLAYKAAKIFKETYSISQGVDIKLTKNIPVSAGLAGGSTDAAGVLKLMNKMFNVNASDEELKSIGLRLGADVPYCIKGGTALCEGIGEKITQLKSFKDKIIVLVKPPFGVSTKEVYKCFDLSKVVFHPKIDSLIENMNNDDVYFVANNMKNLLENVTLRKHRVITNIKEEMKSIGSIGTMMSGSGPTVFALFDDMLKAQLCYDEMKKKYKDVFITRTI.

Lys-8 is an active-site residue. 91–101 (PVSAGLAGGST) serves as a coordination point for ATP. The active site involves Asp-133.

This sequence belongs to the GHMP kinase family. IspE subfamily.

The catalysed reaction is 4-CDP-2-C-methyl-D-erythritol + ATP = 4-CDP-2-C-methyl-D-erythritol 2-phosphate + ADP + H(+). The protein operates within isoprenoid biosynthesis; isopentenyl diphosphate biosynthesis via DXP pathway; isopentenyl diphosphate from 1-deoxy-D-xylulose 5-phosphate: step 3/6. In terms of biological role, catalyzes the phosphorylation of the position 2 hydroxy group of 4-diphosphocytidyl-2C-methyl-D-erythritol. The polypeptide is 4-diphosphocytidyl-2-C-methyl-D-erythritol kinase (Clostridium beijerinckii (strain ATCC 51743 / NCIMB 8052) (Clostridium acetobutylicum)).